The chain runs to 423 residues: Acetylornithine aminotransferase, mitochondrial (423 aa).

At Lys-276 the chain carries N6-(pyridoxal phosphate)lysine.

It belongs to the class-III pyridoxal-phosphate-dependent aminotransferase family. The cofactor is pyridoxal 5'-phosphate.

It localises to the mitochondrion matrix. The enzyme catalyses N(2)-acetyl-L-ornithine + 2-oxoglutarate = N-acetyl-L-glutamate 5-semialdehyde + L-glutamate. It participates in amino-acid biosynthesis; L-arginine biosynthesis; N(2)-acetyl-L-ornithine from L-glutamate: step 4/4. This is Acetylornithine aminotransferase, mitochondrial (ARG8) from Eremothecium gossypii (strain ATCC 10895 / CBS 109.51 / FGSC 9923 / NRRL Y-1056) (Yeast).